The sequence spans 71 residues: V-type proton ATPase subunit e (71 aa).

Topologically, residues 1–2 are lumenal; it reads MS. The chain crosses the membrane as a helical span at residues 3–23; that stretch reads FFHVVFVAFVIAAIGAAGWFV. The Cytoplasmic segment spans residues 24–35; it reads TPKGKNQTLLRT. Residues 36 to 56 form a helical membrane-spanning segment; sequence SLLLTLTCCYLMWAITYLCQL. Residues 57–71 are Lumenal-facing; the sequence is HPLITPRRSDLRMEY.

This sequence belongs to the V-ATPase e1/e2 subunit family. As to quaternary structure, V-ATPase is a heteromultimeric enzyme composed of a peripheral catalytic V1 complex (components A to H) attached to an integral membrane V0 proton pore complex (components: a, c, c', c'', d, e, f and VOA1).

It localises to the vacuole membrane. In terms of biological role, subunit of the V0 complex of vacuolar(H+)-ATPase (V-ATPase), a multisubunit enzyme composed of a peripheral complex (V1) that hydrolyzes ATP and a membrane integral complex (V0) that translocates protons. V-ATPase is responsible for acidifying and maintaining the pH of intracellular compartments. The polypeptide is V-type proton ATPase subunit e (VMA9) (Cryptococcus neoformans var. neoformans serotype D (strain JEC21 / ATCC MYA-565) (Filobasidiella neoformans)).